A 186-amino-acid polypeptide reads, in one-letter code: Small ribosomal subunit protein uS5 (186 aa).

An S5 DRBM domain is found at 20–83; it reads FVDKLVHINR…EAAKRDMIFV (64 aa).

The protein belongs to the universal ribosomal protein uS5 family. Part of the 30S ribosomal subunit. Contacts proteins S4 and S8.

With S4 and S12 plays an important role in translational accuracy. In terms of biological role, located at the back of the 30S subunit body where it stabilizes the conformation of the head with respect to the body. This Brucella anthropi (strain ATCC 49188 / DSM 6882 / CCUG 24695 / JCM 21032 / LMG 3331 / NBRC 15819 / NCTC 12168 / Alc 37) (Ochrobactrum anthropi) protein is Small ribosomal subunit protein uS5.